A 67-amino-acid polypeptide reads, in one-letter code: Bombesin (67 aa).

Residues 1-30 (MLLLSAVKTLLLAWLGIVLVFMSIIKSAML) form the signal peptide. A propeptide spanning residues 31–49 (DFLQEAGKLEGIETYKKEA) is cleaved from the precursor. A Pyrrolidone carboxylic acid modification is found at Q50. Position 64 is a methionine amide (M64).

In terms of tissue distribution, expressed by the skin glands.

The protein resides in the secreted. Stimulates smooth muscle contraction in isolated rat stomach strip. This is Bombesin from Rana shuchinae (Sichuan frog).